The chain runs to 390 residues: Immunoglobulin mu Fc receptor (390 aa).

Positions 1 to 16 are cleaved as a signal peptide; that stretch reads MDFWLWPLYFLPVSGA. Residues 17–251 are Extracellular-facing; sequence LRILPEVKVE…GSQSGREGQG (235 aa). Residues 23 to 123 form the Ig-like domain; it reads VKVEGELGGS…KTQKVTLNVH (101 aa). Residues 33-115 are CDR4; it reads VTIKCPLPEM…AGMNTDRGKT (83 aa). 2 disulfides stabilise this stretch: Cys37–Cys104 and Cys49–Cys58. Residues 40-45 form a CDR1 region; that stretch reads PEMHVR. The segment at 59–70 is CDR2; it reads GTVVSTTNFIKA. Residue Thr92 is modified to Phosphothreonine. Residues 106–115 form a CDR3 region; sequence AGMNTDRGKT. Residues 166 to 204 are disordered; it reads PAQRGKVPPVHHSSPTTQITHRPRVSRASSVAGDKPRTF. The chain crosses the membrane as a helical span at residues 252–272; it reads FHILIPTILGLFLLALLGLVV. Topologically, residues 273–390 are cytoplasmic; the sequence is KRAVERRKAL…DSDDYINVPA (118 aa). Composition is skewed to low complexity over residues 293–311 and 325–334; these read MRALESSQRPRGSPRPRSQ and ADAAGTGEAP. A disordered region spans residues 293 to 348; the sequence is MRALESSQRPRGSPRPRSQNNIYSACPRRARGADAAGTGEAPVPGPGAPLPPAPLQ. Over residues 335-346 the composition is skewed to pro residues; sequence VPGPGAPLPPAP.

In terms of assembly, interacts (via Ig-like domain) with IGHM (via CH4/Cmu4 domain), both secreted and membrane-bound IgM; the interaction is glycan-independent and multivalent theoretically involving up to eight binding sites for the IgM pentamer. Phosphorylated on both Tyr and Ser residues. In terms of processing, O-glycosylated. Sialylated. O-linked glycans regulate trafficking to the plasma membrane. As to expression, expressed by CD19-positive B cells and CD4-positive and CD8-positive T cell populations in primary and secondary lymphoid tissues (at protein level). Among B cell subsets, detected in a subset of bone marrow pro- and pre-B cells, in most follicular and memory B cells and in a small subset of germinal center B cells (at protein level). Expressed at lower levels in CD56-positive NK cells (at protein level). Expressed in lymph nodes, lung, thymus and kidneys. Very weak expression detected in spleen, liver, heart, and salivary gland.

Its subcellular location is the cell membrane. The protein resides in the early endosome membrane. It is found in the golgi apparatus. The protein localises to the trans-Golgi network membrane. It localises to the lysosome membrane. Its subcellular location is the secreted. In terms of biological role, high-affinity Fc receptor for immunoglobulin M (IgM), both secreted and membrane-bound IgM. Primarily regulates IgM transport and homeostasis. In lymphoid cells, enables exocytosis of membrane-bound IgM on the plasma membrane as well as endocytosis of IgM-antigen complexes toward lysosomes for degradation. In mucosal epithelium, mediates retrotranscytosis of antigen-IgM complexes across mucosal M cells toward antigen-presenting cells in mucosal lymphoid tissues. Triggers costimulatory signaling and mediates most of IgM effector functions involved in B cell development and primary immune response to infection. Likely limits tonic IgM BCR signaling to self-antigens for proper negative selection of autoreactive B cells in the bone marrow and for the maintenance of regulatory B cell pool in peripheral lymphoid organs. Mediates antibody responses to T cell-dependent and T cell-independent antigens and promotes induction of an efficient neutralizing IgG response. Engages in cross-talk with antigen-receptor signaling via the non-canonical NF-kappa-B, MAP kinases and calcium signaling pathways. This is Immunoglobulin mu Fc receptor from Homo sapiens (Human).